A 305-amino-acid polypeptide reads, in one-letter code: Probable aspartoacylase (305 aa).

Zn(2+) contacts are provided by histidine 13 and glutamate 16. Substrate contacts are provided by residues arginine 55 and 62-63; that span reads NR. Position 105 (histidine 105) interacts with Zn(2+). Residues glutamate 163 and tyrosine 273 each coordinate substrate.

Belongs to the AspA/AstE family. Aspartoacylase subfamily. It depends on Zn(2+) as a cofactor.

The enzyme catalyses an N-acyl-L-aspartate + H2O = a carboxylate + L-aspartate. The sequence is that of Probable aspartoacylase from Prochlorococcus marinus (strain NATL1A).